Reading from the N-terminus, the 538-residue chain is Bifunctional purine biosynthesis protein PurH (538 aa).

An MGS-like domain is found at 8–158; that stretch reads IPAPDKVEIK…KNHAYVTILT (151 aa).

The protein belongs to the PurH family.

It catalyses the reaction (6R)-10-formyltetrahydrofolate + 5-amino-1-(5-phospho-beta-D-ribosyl)imidazole-4-carboxamide = 5-formamido-1-(5-phospho-D-ribosyl)imidazole-4-carboxamide + (6S)-5,6,7,8-tetrahydrofolate. The catalysed reaction is IMP + H2O = 5-formamido-1-(5-phospho-D-ribosyl)imidazole-4-carboxamide. The protein operates within purine metabolism; IMP biosynthesis via de novo pathway; 5-formamido-1-(5-phospho-D-ribosyl)imidazole-4-carboxamide from 5-amino-1-(5-phospho-D-ribosyl)imidazole-4-carboxamide (10-formyl THF route): step 1/1. Its pathway is purine metabolism; IMP biosynthesis via de novo pathway; IMP from 5-formamido-1-(5-phospho-D-ribosyl)imidazole-4-carboxamide: step 1/1. The polypeptide is Bifunctional purine biosynthesis protein PurH (Rhizobium etli (strain ATCC 51251 / DSM 11541 / JCM 21823 / NBRC 15573 / CFN 42)).